We begin with the raw amino-acid sequence, 350 residues long: Methionine import ATP-binding protein MetN (350 aa).

The 240-residue stretch at 2–241 (IQIKNLKKEY…PQAPVTRSFV (240 aa)) folds into the ABC transporter domain. 38 to 45 (GHSGAGKS) contributes to the ATP binding site.

It belongs to the ABC transporter superfamily. Methionine importer (TC 3.A.1.24) family. As to quaternary structure, the complex is composed of two ATP-binding proteins (MetN), two transmembrane proteins (MetI) and a solute-binding protein (MetQ).

The protein resides in the cell inner membrane. It carries out the reaction L-methionine(out) + ATP + H2O = L-methionine(in) + ADP + phosphate + H(+). The catalysed reaction is D-methionine(out) + ATP + H2O = D-methionine(in) + ADP + phosphate + H(+). Part of the ABC transporter complex MetNIQ involved in methionine import. Responsible for energy coupling to the transport system. The chain is Methionine import ATP-binding protein MetN from Francisella tularensis subsp. holarctica (strain LVS).